The following is a 291-amino-acid chain: Lipoyl synthase (291 aa).

7 residues coordinate [4Fe-4S] cluster: Cys35, Cys40, Cys46, Cys61, Cys65, Cys68, and Ser273. The 216-residue stretch at Phe47–Glu262 folds into the Radical SAM core domain.

The protein belongs to the radical SAM superfamily. Lipoyl synthase family. Requires [4Fe-4S] cluster as cofactor.

The protein localises to the cytoplasm. The catalysed reaction is [[Fe-S] cluster scaffold protein carrying a second [4Fe-4S](2+) cluster] + N(6)-octanoyl-L-lysyl-[protein] + 2 oxidized [2Fe-2S]-[ferredoxin] + 2 S-adenosyl-L-methionine + 4 H(+) = [[Fe-S] cluster scaffold protein] + N(6)-[(R)-dihydrolipoyl]-L-lysyl-[protein] + 4 Fe(3+) + 2 hydrogen sulfide + 2 5'-deoxyadenosine + 2 L-methionine + 2 reduced [2Fe-2S]-[ferredoxin]. Its pathway is protein modification; protein lipoylation via endogenous pathway; protein N(6)-(lipoyl)lysine from octanoyl-[acyl-carrier-protein]: step 2/2. Catalyzes the radical-mediated insertion of two sulfur atoms into the C-6 and C-8 positions of the octanoyl moiety bound to the lipoyl domains of lipoate-dependent enzymes, thereby converting the octanoylated domains into lipoylated derivatives. In Citrifermentans bemidjiense (strain ATCC BAA-1014 / DSM 16622 / JCM 12645 / Bem) (Geobacter bemidjiensis), this protein is Lipoyl synthase.